The primary structure comprises 377 residues: Nitric oxide reductase FlRd-NAD(+) reductase (377 aa).

The protein belongs to the FAD-dependent oxidoreductase family. Requires FAD as cofactor.

It localises to the cytoplasm. It carries out the reaction 2 reduced [nitric oxide reductase rubredoxin domain] + NAD(+) + H(+) = 2 oxidized [nitric oxide reductase rubredoxin domain] + NADH. The protein operates within nitrogen metabolism; nitric oxide reduction. Functionally, one of at least two accessory proteins for anaerobic nitric oxide (NO) reductase. Reduces the rubredoxin moiety of NO reductase. The polypeptide is Nitric oxide reductase FlRd-NAD(+) reductase (Salmonella newport (strain SL254)).